Consider the following 489-residue polypeptide: Aklavinone 12-hydroxylase DnrF (489 aa).

Residues 17 to 18, Glu37, Gln121, and Leu145 contribute to the FAD site; that span reads LG. Residue Tyr224 is the Proton acceptor of the active site. Asp308 is a binding site for FAD. Gly317 contacts aklavinone. Residues 402-428 form a disordered region; the sequence is VAAEDDDPEPTEDPRRPSGRPGFRAPH.

Belongs to the PheA/TfdB FAD monooxygenase family. As to quaternary structure, monomer. It depends on FAD as a cofactor.

The catalysed reaction is aklavinone + NADPH + O2 + H(+) = epsilon-rhodomycinone + NADP(+) + H2O. The protein operates within antibiotic biosynthesis; daunorubicin biosynthesis. It functions in the pathway antibiotic biosynthesis; carminomycin biosynthesis. It participates in antibiotic biosynthesis; rhodomycin biosynthesis. Its pathway is antibiotic biosynthesis; doxorubicin biosynthesis. Functionally, involved in the biosynthesis of the anthracyclines carminomycin, rhodomycin, daunorubicin (daunomycin) and doxorubicin (adriamycin) which are aromatic polyketide antibiotics that exhibit high cytotoxicity and are widely applied in the chemotherapy of a variety of cancers. Catalyzes the incorporation of a hydroxyl group at position C-11 of aklavinone, resulting in epsilon-rhodomycinone. The sequence is that of Aklavinone 12-hydroxylase DnrF (dnrF) from Streptomyces peucetius subsp. caesius.